The following is a 226-amino-acid chain: NADH-quinone oxidoreductase subunit C (226 aa).

The disordered stretch occupies residues 1–21 (MTEPTGDQTPEIIGVRRGMFG).

This sequence belongs to the complex I 30 kDa subunit family. In terms of assembly, NDH-1 is composed of 14 different subunits. Subunits NuoB, C, D, E, F, and G constitute the peripheral sector of the complex.

It is found in the cell membrane. The enzyme catalyses a quinone + NADH + 5 H(+)(in) = a quinol + NAD(+) + 4 H(+)(out). NDH-1 shuttles electrons from NADH, via FMN and iron-sulfur (Fe-S) centers, to quinones in the respiratory chain. The immediate electron acceptor for the enzyme in this species is believed to be a menaquinone. Couples the redox reaction to proton translocation (for every two electrons transferred, four hydrogen ions are translocated across the cytoplasmic membrane), and thus conserves the redox energy in a proton gradient. This is NADH-quinone oxidoreductase subunit C from Mycolicibacterium gilvum (strain PYR-GCK) (Mycobacterium gilvum (strain PYR-GCK)).